Consider the following 313-residue polypeptide: Porphobilinogen deaminase (313 aa).

C243 is modified (S-(dipyrrolylmethanemethyl)cysteine).

This sequence belongs to the HMBS family. As to quaternary structure, monomer. The cofactor is dipyrromethane.

The enzyme catalyses 4 porphobilinogen + H2O = hydroxymethylbilane + 4 NH4(+). It functions in the pathway porphyrin-containing compound metabolism; protoporphyrin-IX biosynthesis; coproporphyrinogen-III from 5-aminolevulinate: step 2/4. In terms of biological role, tetrapolymerization of the monopyrrole PBG into the hydroxymethylbilane pre-uroporphyrinogen in several discrete steps. This Bordetella petrii (strain ATCC BAA-461 / DSM 12804 / CCUG 43448) protein is Porphobilinogen deaminase.